Here is a 276-residue protein sequence, read N- to C-terminus: Protein PXR1 (276 aa).

The interval 1 to 23 (MGLAGTKIKQRFGNDPRNTNWSN) is disordered. Residues 25 to 71 (TSRFGHQYLAKMGWQQGSGLGLVSHALTTHVKVSIKDDNLGLGAKLH) form the G-patch domain. Residues 152–172 (DDGKKSRKRKADESETKEDKK) show a composition bias toward basic and acidic residues. The disordered stretch occupies residues 152 to 261 (DDGKKSRKRK…SKWIKQKRAS (110 aa)). Basic residues predominate over residues 173–218 (TLKKHKKEKKDKKEKKEKKKKKEKKDKKDKKDKKNKKDKKDKKDKK). A compositionally biased stretch (basic and acidic residues) spans 219–228 (DKKDKIRTGS). Over residues 229-239 (DETLVSKESSA) the composition is skewed to polar residues.

It belongs to the PINX1 family.

Its subcellular location is the nucleus. It localises to the nucleolus. In terms of biological role, involved in rRNA-processing at A0, A1 and A2 sites and negatively regulates telomerase. This is Protein PXR1 (PXR1) from Candida albicans (strain SC5314 / ATCC MYA-2876) (Yeast).